The sequence spans 1317 residues: Nucleoporin NUP145 (1317 aa).

Residues 1–16 (MFNKSVNSGFTFGNQN) show a composition bias toward polar residues. Positions 1–36 (MFNKSVNSGFTFGNQNTSTPTSTPAQPSSSLQFPQK) are disordered. An FG 1 repeat occupies 12–13 (FG). Residues 17 to 30 (TSTPTSTPAQPSSS) show a composition bias toward low complexity. The GLFG 1 repeat unit spans residues 39–42 (GLFG). One copy of the FG 2 repeat lies at 79–80 (FG). The GLFG 2 repeat unit spans residues 89-92 (GLFG). The FG 3 repeat unit spans residues 106–107 (FG). Residues 133–165 (QNGGLFGNSNNNNITSTTQNGGLFGKPTTTPAG) form a disordered region. GLFG repeat units lie at residues 136–139 (GLFG), 154–157 (GLFG), 168–171 (GLFG), and 181–184 (GLFG). Low complexity predominate over residues 139–164 (GNSNNNNITSTTQNGGLFGKPTTTPA). The GLFG 7; approximate repeat unit spans residues 193–196 (GIFG). Residues 206–209 (GLFG) form a GLFG 8 repeat. The segment at 249–278 (TSSLSDVNGKSDAEPKPIENRRTYSFSSSV) is disordered. A compositionally biased stretch (basic and acidic residues) spans 257 to 270 (GKSDAEPKPIENRR). S273 carries the phosphoserine modification. The short motif at 369-385 (RKLKIDSNRSAAKKLKL) is the Bipartite nuclear localization signal element. The tract at residues 390–450 (PAITKKHMQD…NLNKQDGENT (61 aa)) is disordered. Positions 398 to 523 (QDEQDSSENE…FGKIVIFRSS (126 aa)) are required for autocatalytic cleavage. Phosphoserine is present on residues S403, S404, and S414. Positions 418–427 (IDRKENRDNN) are enriched in basic and acidic residues. The span at 428-444 (LDNTYLNGKEQSNNLNK) shows a compositional bias: polar residues. Residues 458-605 (SFGYWCSPSP…GTWTFKVNHF (148 aa)) enclose the Peptidase S59 domain. Positions 460–604 (GYWCSPSPEQ…GGTWTFKVNH (145 aa)) are nucleoporin RNA-binding motif (NRM). A phosphoserine mark is found at S667, S679, and S689. Phosphothreonine is present on T751.

The protein belongs to the nucleoporin GLFG family. Component of the nuclear pore complex (NPC). NPC constitutes the exclusive means of nucleocytoplasmic transport. NPCs allow the passive diffusion of ions and small molecules and the active, nuclear transport receptor-mediated bidirectional transport of macromolecules such as proteins, RNAs, ribonucleoparticles (RNPs), and ribosomal subunits across the nuclear envelope. Due to its 8-fold rotational symmetry, all subunits are present with 8 copies or multiples thereof. NUP145C is part of the heptameric 0.5 MDa autoassembling NUP84 NPC subcomplex (NUP84, NUP85, NUP120, NUP133, NUP145C, SEC13 and SEH1). NUP145N may bind homomeric RNA and interacts through its FG repeats with karyopherins. Interacts with MLP1 and MLP2. NUP145 is autocatalytically cleaved in NUP145N and NUP145C.

The protein localises to the nucleus. It localises to the nuclear pore complex. It is found in the nucleus membrane. Functions as a component of the nuclear pore complex (NPC). NPC components, collectively referred to as nucleoporins (NUPs), can play the role of both NPC structural components and of docking or interaction partners for transiently associated nuclear transport factors. Active directional transport is assured by both, a Phe-Gly (FG) repeat affinity gradient for these transport factors across the NPC and a transport cofactor concentration gradient across the nuclear envelope (GSP1 and GSP2 GTPases associated predominantly with GTP in the nucleus, with GDP in the cytoplasm). NUP145 is autocatalytically cleaved in vivo in 2 polypeptides which assume different functions in the NPC. NUP145N as one of the FG repeat nucleoporins participates in karyopherin interactions and contains part of the autocatalytic cleavage activity. NUP145C as part of the NUP84 complex is involved in nuclear poly(A)+ RNA and tRNA export. It is also required for normal NPC distribution (probably through interactions with MLP1 and MLP2) and NPC assembly, as well as for normal nuclear envelope organization. In Saccharomyces cerevisiae (strain ATCC 204508 / S288c) (Baker's yeast), this protein is Nucleoporin NUP145 (NUP145).